The chain runs to 305 residues: tRNA pseudouridine synthase B (305 aa).

D50 serves as the catalytic Nucleophile.

This sequence belongs to the pseudouridine synthase TruB family. Type 1 subfamily.

It catalyses the reaction uridine(55) in tRNA = pseudouridine(55) in tRNA. Responsible for synthesis of pseudouridine from uracil-55 in the psi GC loop of transfer RNAs. In Rhodococcus jostii (strain RHA1), this protein is tRNA pseudouridine synthase B.